Here is a 207-residue protein sequence, read N- to C-terminus: Large ribosomal subunit protein uL18 (207 aa).

This sequence belongs to the universal ribosomal protein uL18 family. As to quaternary structure, part of the 50S ribosomal subunit. Contacts the 5S and 23S rRNAs.

In terms of biological role, this is one of the proteins that bind and probably mediate the attachment of the 5S RNA into the large ribosomal subunit, where it forms part of the central protuberance. The sequence is that of Large ribosomal subunit protein uL18 from Caldivirga maquilingensis (strain ATCC 700844 / DSM 13496 / JCM 10307 / IC-167).